We begin with the raw amino-acid sequence, 299 residues long: Protein U23 (299 aa).

Residues 1 to 27 (MRKSEFNAKSCFLMIGICVFNLNSSSC) form the signal peptide. The chain crosses the membrane as a helical span at residues 247 to 267 (LVIWICGISFVGAFIIVIVIL).

The protein resides in the host membrane. The protein is Protein U23 (U23) of Human herpesvirus 6B (strain Z29) (HHV-6 variant B).